The chain runs to 569 residues: Aspartate--tRNA ligase, cytoplasmic 2 (569 aa).

The interval 1 to 23 is disordered; it reads MSEENNHKEKSKNEIKKEKKKIE. The aspartate stretch occupies residues 292–295; it reads QFYR. Arg-314 contributes to the L-aspartate binding site. Residues 314–316 and 322–324 each bind ATP; these read RTD and RHL. Ser-475 and Arg-479 together coordinate L-aspartate. 540–543 is a binding site for ATP; the sequence is GLER.

It belongs to the class-II aminoacyl-tRNA synthetase family. Type 2 subfamily.

The protein resides in the cytoplasm. The catalysed reaction is tRNA(Asp) + L-aspartate + ATP = L-aspartyl-tRNA(Asp) + AMP + diphosphate. The polypeptide is Aspartate--tRNA ligase, cytoplasmic 2 (aspS2) (Dictyostelium discoideum (Social amoeba)).